The following is a 175-amino-acid chain: Peptide deformylase (175 aa).

Cys-96 and His-138 together coordinate Fe cation. Glu-139 is an active-site residue. A Fe cation-binding site is contributed by His-142.

It belongs to the polypeptide deformylase family. It depends on Fe(2+) as a cofactor.

It carries out the reaction N-terminal N-formyl-L-methionyl-[peptide] + H2O = N-terminal L-methionyl-[peptide] + formate. Functionally, removes the formyl group from the N-terminal Met of newly synthesized proteins. Requires at least a dipeptide for an efficient rate of reaction. N-terminal L-methionine is a prerequisite for activity but the enzyme has broad specificity at other positions. This Rhodopseudomonas palustris (strain BisB18) protein is Peptide deformylase.